The primary structure comprises 176 residues: Ribosome maturation factor RimM (176 aa).

The 74-residue stretch at Pro100 to Leu173 folds into the PRC barrel domain.

Belongs to the RimM family. As to quaternary structure, binds ribosomal protein uS19.

It is found in the cytoplasm. In terms of biological role, an accessory protein needed during the final step in the assembly of 30S ribosomal subunit, possibly for assembly of the head region. Essential for efficient processing of 16S rRNA. May be needed both before and after RbfA during the maturation of 16S rRNA. It has affinity for free ribosomal 30S subunits but not for 70S ribosomes. This Prochlorococcus marinus (strain SARG / CCMP1375 / SS120) protein is Ribosome maturation factor RimM.